A 388-amino-acid polypeptide reads, in one-letter code: Mitochondrial distribution and morphology protein 12 (388 aa).

Residues 1-388 form the SMP-LTD domain; the sequence is MSLDINWSLL…VFPNFHTVAL (388 aa). Disordered stretches follow at residues 75 to 101 and 209 to 249; these read DDEGDFAEEEKQREKEREERDKLRNEA and PMSI…KVSS. Positions 83–101 are enriched in basic and acidic residues; the sequence is EEKQREKEREERDKLRNEA. Residues 234–243 show a composition bias toward pro residues; the sequence is PSPPAHPAGL.

The protein belongs to the MDM12 family. Component of the ER-mitochondria encounter structure (ERMES) or MDM complex, composed of MMM1, MDM10, MDM12 and MDM34. An MMM1 homodimer associates with one molecule of MDM12 on each side in a pairwise head-to-tail manner, and the SMP-LTD domains of MMM1 and MDM12 generate a continuous hydrophobic tunnel for phospholipid trafficking.

Its subcellular location is the mitochondrion outer membrane. The protein resides in the endoplasmic reticulum membrane. Functionally, component of the ERMES/MDM complex, which serves as a molecular tether to connect the endoplasmic reticulum (ER) and mitochondria. Components of this complex are involved in the control of mitochondrial shape and protein biogenesis, and function in nonvesicular lipid trafficking between the ER and mitochondria. MDM12 is required for the interaction of the ER-resident membrane protein MMM1 and the outer mitochondrial membrane-resident beta-barrel protein MDM10. The MDM12-MMM1 subcomplex functions in the major beta-barrel assembly pathway that is responsible for biogenesis of all mitochondrial outer membrane beta-barrel proteins, and acts in a late step after the SAM complex. The MDM10-MDM12-MMM1 subcomplex further acts in the TOM40-specific pathway after the action of the MDM12-MMM1 complex. Essential for establishing and maintaining the structure of mitochondria and maintenance of mtDNA nucleoids. This Cryptococcus neoformans var. neoformans serotype D (strain JEC21 / ATCC MYA-565) (Filobasidiella neoformans) protein is Mitochondrial distribution and morphology protein 12.